A 405-amino-acid polypeptide reads, in one-letter code: Probable tRNA sulfurtransferase (405 aa).

One can recognise a THUMP domain in the interval 60-165; that stretch reads DKVMGRLKLV…LNGIFLSSET (106 aa). ATP is bound by residues 183–184, 208–209, Arg-265, Gly-287, and Gln-296; these read ML and HF.

It belongs to the ThiI family.

It localises to the cytoplasm. It catalyses the reaction [ThiI sulfur-carrier protein]-S-sulfanyl-L-cysteine + a uridine in tRNA + 2 reduced [2Fe-2S]-[ferredoxin] + ATP + H(+) = [ThiI sulfur-carrier protein]-L-cysteine + a 4-thiouridine in tRNA + 2 oxidized [2Fe-2S]-[ferredoxin] + AMP + diphosphate. The catalysed reaction is [ThiS sulfur-carrier protein]-C-terminal Gly-Gly-AMP + S-sulfanyl-L-cysteinyl-[cysteine desulfurase] + AH2 = [ThiS sulfur-carrier protein]-C-terminal-Gly-aminoethanethioate + L-cysteinyl-[cysteine desulfurase] + A + AMP + 2 H(+). Its pathway is cofactor biosynthesis; thiamine diphosphate biosynthesis. Catalyzes the ATP-dependent transfer of a sulfur to tRNA to produce 4-thiouridine in position 8 of tRNAs, which functions as a near-UV photosensor. Also catalyzes the transfer of sulfur to the sulfur carrier protein ThiS, forming ThiS-thiocarboxylate. This is a step in the synthesis of thiazole, in the thiamine biosynthesis pathway. The sulfur is donated as persulfide by IscS. This chain is Probable tRNA sulfurtransferase, found in Lactiplantibacillus plantarum (strain ATCC BAA-793 / NCIMB 8826 / WCFS1) (Lactobacillus plantarum).